The chain runs to 736 residues: Phosphoribosylformylglycinamidine synthase subunit PurL (736 aa).

The active site involves histidine 49. Residues tyrosine 52 and lysine 91 each contribute to the ATP site. Position 93 (glutamate 93) interacts with Mg(2+). Residues serine 94–histidine 97 and arginine 116 each bind substrate. The active-site Proton acceptor is histidine 95. Mg(2+) is bound at residue aspartate 117. A substrate-binding site is contributed by glutamine 240. Aspartate 268 contacts Mg(2+). Position 312-314 (glutamate 312–glutamine 314) interacts with substrate. Aspartate 493 and glycine 530 together coordinate ATP. Asparagine 531 is a binding site for Mg(2+). Position 533 (serine 533) interacts with substrate.

The protein belongs to the FGAMS family. In terms of assembly, monomer. Part of the FGAM synthase complex composed of 1 PurL, 1 PurQ and 2 PurS subunits.

Its subcellular location is the cytoplasm. The enzyme catalyses N(2)-formyl-N(1)-(5-phospho-beta-D-ribosyl)glycinamide + L-glutamine + ATP + H2O = 2-formamido-N(1)-(5-O-phospho-beta-D-ribosyl)acetamidine + L-glutamate + ADP + phosphate + H(+). Its pathway is purine metabolism; IMP biosynthesis via de novo pathway; 5-amino-1-(5-phospho-D-ribosyl)imidazole from N(2)-formyl-N(1)-(5-phospho-D-ribosyl)glycinamide: step 1/2. In terms of biological role, part of the phosphoribosylformylglycinamidine synthase complex involved in the purines biosynthetic pathway. Catalyzes the ATP-dependent conversion of formylglycinamide ribonucleotide (FGAR) and glutamine to yield formylglycinamidine ribonucleotide (FGAM) and glutamate. The FGAM synthase complex is composed of three subunits. PurQ produces an ammonia molecule by converting glutamine to glutamate. PurL transfers the ammonia molecule to FGAR to form FGAM in an ATP-dependent manner. PurS interacts with PurQ and PurL and is thought to assist in the transfer of the ammonia molecule from PurQ to PurL. In Rhodopseudomonas palustris (strain BisB18), this protein is Phosphoribosylformylglycinamidine synthase subunit PurL.